The chain runs to 61 residues: Alpha-conotoxin-like Sm1.1 (61 aa).

The first 16 residues, 1-16, serve as a signal peptide directing secretion; that stretch reads MFTVFLLVVLATTVVS. The propeptide occupies 17–43; sequence FPSDRASDGRDDEAKDERSDMHESGRK. Residues 19–46 are disordered; the sequence is SDRASDGRDDEAKDERSDMHESGRKGRG. Over residues 21-42 the composition is skewed to basic and acidic residues; that stretch reads RASDGRDDEAKDERSDMHESGR. Intrachain disulfides connect Cys48–Cys53 and Cys49–Cys59. Residue Pro55 is modified to 4-hydroxyproline; partial. Cys59 carries the post-translational modification Cysteine amide.

The protein belongs to the conotoxin A superfamily. Expressed by the venom duct.

The protein localises to the secreted. In terms of biological role, alpha-conotoxins act on postsynaptic membranes, they bind to the nicotinic acetylcholine receptors (nAChR) and thus inhibit them. This chain is Alpha-conotoxin-like Sm1.1, found in Conus stercusmuscarum (Fly-specked cone).